A 518-amino-acid chain; its full sequence is NADH-quinone oxidoreductase subunit N (518 aa).

A run of 14 helical transmembrane segments spans residues 18–38, 45–65, 82–102, 113–133, 136–156, 171–191, 220–240, 254–274, 295–315, 328–348, 355–375, 399–419, 439–459, and 486–506; these read FRPEMALTFGTLVLFVLDLVF, VALLTAGALAVLAAAAGLLAI, AFAIFFKWLFLAAGALTVIIA, IGQFFALLMAIVLGMFMMASA, LLMVYLSLELVSMVSYVLAGF, VIYGGVASGVMLFGMSYLYGL, VALVVAIVFVTAGIGYKVAAV, PTPFTAFLSVGPKAAGFALAI, LAGIPWPAVVGVIAAVTMTLG, LLAYSSIAHAGYTLMGLSAVS, VMIYMLVYLVMNVGAFLVVIL, AVAFAIFLFSLTGLPPFAGFV, WYAWLALIGALNTAIALYYYV, and VMLGAFSVAILVFGIWWTPMV.

It belongs to the complex I subunit 2 family. NDH-1 is composed of 14 different subunits. Subunits NuoA, H, J, K, L, M, N constitute the membrane sector of the complex.

It localises to the cell inner membrane. The enzyme catalyses a quinone + NADH + 5 H(+)(in) = a quinol + NAD(+) + 4 H(+)(out). In terms of biological role, NDH-1 shuttles electrons from NADH, via FMN and iron-sulfur (Fe-S) centers, to quinones in the respiratory chain. The immediate electron acceptor for the enzyme in this species is believed to be ubiquinone. Couples the redox reaction to proton translocation (for every two electrons transferred, four hydrogen ions are translocated across the cytoplasmic membrane), and thus conserves the redox energy in a proton gradient. This chain is NADH-quinone oxidoreductase subunit N, found in Anaeromyxobacter sp. (strain Fw109-5).